The chain runs to 280 residues: Putative pyruvate, phosphate dikinase regulatory protein 1 (280 aa).

152–159 (GVSRTSKT) contributes to the ADP binding site.

Belongs to the pyruvate, phosphate/water dikinase regulatory protein family. PDRP subfamily.

It carries out the reaction N(tele)-phospho-L-histidyl/L-threonyl-[pyruvate, phosphate dikinase] + ADP = N(tele)-phospho-L-histidyl/O-phospho-L-threonyl-[pyruvate, phosphate dikinase] + AMP + H(+). It catalyses the reaction N(tele)-phospho-L-histidyl/O-phospho-L-threonyl-[pyruvate, phosphate dikinase] + phosphate + H(+) = N(tele)-phospho-L-histidyl/L-threonyl-[pyruvate, phosphate dikinase] + diphosphate. In terms of biological role, bifunctional serine/threonine kinase and phosphorylase involved in the regulation of the pyruvate, phosphate dikinase (PPDK) by catalyzing its phosphorylation/dephosphorylation. The chain is Putative pyruvate, phosphate dikinase regulatory protein 1 from Latilactobacillus sakei subsp. sakei (strain 23K) (Lactobacillus sakei subsp. sakei).